A 518-amino-acid polypeptide reads, in one-letter code: UNC5C-like protein (518 aa).

Topologically, residues 1 to 10 are extracellular; the sequence is MSPQESSVQP. The helical; Signal-anchor for type III membrane protein transmembrane segment at 11–31 threads the bilayer; it reads SQFLLLVGIPVASALLLAQCL. Residues 32-518 lie on the Cytoplasmic side of the membrane; that stretch reads RWHCCQWLPG…NHGLELDEKL (487 aa). The region spanning 102–237 is the ZU5 domain; sequence VFSAREVDHR…FSLYTCVLEA (136 aa). An interaction with RELA and NFKB1 region spans residues 186-400; the sequence is QQPSQACAYS…ETWAVPPPVS (215 aa). The tract at residues 208 to 235 is peptidase S68; it reads PLGQPGTHISRDECRILLSHFSLYTCVL. Active-site residues include H227 and S229. The Death domain maps to 415 to 494; the sequence is QLQMLLEPNS…SAIQNYLNRS (80 aa).

This sequence belongs to the unc-5 family. In terms of assembly, interacts with p65/RELA and NFKB1.

The protein localises to the membrane. The protein resides in the cytoplasm. In terms of biological role, inhibits NF-kappa-B-dependent transcription by impairing NF-kappa-B binding to its targets. In Mus musculus (Mouse), this protein is UNC5C-like protein (Unc5cl).